The following is a 397-amino-acid chain: Chorismate synthase (397 aa).

NADP(+) is bound by residues R40 and R46. FMN contacts are provided by residues 129–131 (RSS), 257–258 (QA), G302, 317–321 (KPISS), and R343.

Belongs to the chorismate synthase family. In terms of assembly, homotetramer. The cofactor is FMNH2.

The enzyme catalyses 5-O-(1-carboxyvinyl)-3-phosphoshikimate = chorismate + phosphate. The protein operates within metabolic intermediate biosynthesis; chorismate biosynthesis; chorismate from D-erythrose 4-phosphate and phosphoenolpyruvate: step 7/7. Catalyzes the anti-1,4-elimination of the C-3 phosphate and the C-6 proR hydrogen from 5-enolpyruvylshikimate-3-phosphate (EPSP) to yield chorismate, which is the branch point compound that serves as the starting substrate for the three terminal pathways of aromatic amino acid biosynthesis. This reaction introduces a second double bond into the aromatic ring system. The chain is Chorismate synthase from Chlorobium phaeobacteroides (strain DSM 266 / SMG 266 / 2430).